The primary structure comprises 354 residues: Holliday junction branch migration complex subunit RuvB (354 aa).

Positions 4–198 are large ATPase domain (RuvB-L); sequence TTDYGASNTG…FGFTAHLDFY (195 aa). Residues leucine 37, arginine 38, glycine 79, lysine 82, threonine 83, threonine 84, 145–147, arginine 188, tyrosine 198, and arginine 235 contribute to the ATP site; that span reads EDF. Position 83 (threonine 83) interacts with Mg(2+). The small ATPAse domain (RuvB-S) stretch occupies residues 199-269; the sequence is PHEELEKLIE…DVKEALALYQ (71 aa). The interval 272-354 is head domain (RuvB-H); sequence SEGLDRLDIA…TPKDDVSKLF (83 aa). DNA contacts are provided by arginine 327 and arginine 332.

Belongs to the RuvB family. In terms of assembly, homohexamer. Forms an RuvA(8)-RuvB(12)-Holliday junction (HJ) complex. HJ DNA is sandwiched between 2 RuvA tetramers; dsDNA enters through RuvA and exits via RuvB. An RuvB hexamer assembles on each DNA strand where it exits the tetramer. Each RuvB hexamer is contacted by two RuvA subunits (via domain III) on 2 adjacent RuvB subunits; this complex drives branch migration. In the full resolvosome a probable DNA-RuvA(4)-RuvB(12)-RuvC(2) complex forms which resolves the HJ.

The protein localises to the cytoplasm. It carries out the reaction ATP + H2O = ADP + phosphate + H(+). Functionally, the RuvA-RuvB-RuvC complex processes Holliday junction (HJ) DNA during genetic recombination and DNA repair, while the RuvA-RuvB complex plays an important role in the rescue of blocked DNA replication forks via replication fork reversal (RFR). RuvA specifically binds to HJ cruciform DNA, conferring on it an open structure. The RuvB hexamer acts as an ATP-dependent pump, pulling dsDNA into and through the RuvAB complex. RuvB forms 2 homohexamers on either side of HJ DNA bound by 1 or 2 RuvA tetramers; 4 subunits per hexamer contact DNA at a time. Coordinated motions by a converter formed by DNA-disengaged RuvB subunits stimulates ATP hydrolysis and nucleotide exchange. Immobilization of the converter enables RuvB to convert the ATP-contained energy into a lever motion, pulling 2 nucleotides of DNA out of the RuvA tetramer per ATP hydrolyzed, thus driving DNA branch migration. The RuvB motors rotate together with the DNA substrate, which together with the progressing nucleotide cycle form the mechanistic basis for DNA recombination by continuous HJ branch migration. Branch migration allows RuvC to scan DNA until it finds its consensus sequence, where it cleaves and resolves cruciform DNA. The protein is Holliday junction branch migration complex subunit RuvB of Bifidobacterium longum (strain NCC 2705).